A 365-amino-acid chain; its full sequence is Phosphoserine aminotransferase (365 aa).

Arg-46 is an L-glutamate binding site. Pyridoxal 5'-phosphate is bound by residues 80–81 (AT), Trp-106, Thr-157, Asp-177, and Gln-200. Lys-201 is subject to N6-(pyridoxal phosphate)lysine. 242–243 (NT) contributes to the pyridoxal 5'-phosphate binding site.

The protein belongs to the class-V pyridoxal-phosphate-dependent aminotransferase family. SerC subfamily. As to quaternary structure, homodimer. Pyridoxal 5'-phosphate serves as cofactor.

The protein resides in the cytoplasm. The enzyme catalyses O-phospho-L-serine + 2-oxoglutarate = 3-phosphooxypyruvate + L-glutamate. The catalysed reaction is 4-(phosphooxy)-L-threonine + 2-oxoglutarate = (R)-3-hydroxy-2-oxo-4-phosphooxybutanoate + L-glutamate. Its pathway is amino-acid biosynthesis; L-serine biosynthesis; L-serine from 3-phospho-D-glycerate: step 2/3. It functions in the pathway cofactor biosynthesis; pyridoxine 5'-phosphate biosynthesis; pyridoxine 5'-phosphate from D-erythrose 4-phosphate: step 3/5. Functionally, catalyzes the reversible conversion of 3-phosphohydroxypyruvate to phosphoserine and of 3-hydroxy-2-oxo-4-phosphonooxybutanoate to phosphohydroxythreonine. This chain is Phosphoserine aminotransferase, found in Leptospira biflexa serovar Patoc (strain Patoc 1 / Ames).